The primary structure comprises 208 residues: Small ribosomal subunit protein uS3 (208 aa).

In terms of domain architecture, KH type-2 spans 38–106 (IRDYIKARLY…EILIDIQEVR (69 aa)).

This sequence belongs to the universal ribosomal protein uS3 family. Part of the 30S ribosomal subunit. Forms a tight complex with proteins S10 and S14.

Binds the lower part of the 30S subunit head. Binds mRNA in the 70S ribosome, positioning it for translation. The sequence is that of Small ribosomal subunit protein uS3 from Syntrophobacter fumaroxidans (strain DSM 10017 / MPOB).